The primary structure comprises 311 residues: Pyrimidine-specific ribonucleoside hydrolase RihA (311 aa).

The active site involves H240.

Belongs to the IUNH family. RihA subfamily.

In terms of biological role, hydrolyzes with equal efficiency cytidine or uridine to ribose and cytosine or uracil, respectively. The polypeptide is Pyrimidine-specific ribonucleoside hydrolase RihA (Escherichia coli O9:H4 (strain HS)).